The chain runs to 83 residues: ATP synthase subunit 9, mitochondrial (83 aa).

2 helical membrane passes run 8–28 (IGAG…GNVL) and 45–72 (SFGY…LISS).

The protein belongs to the ATPase C chain family. As to quaternary structure, F-type ATPases have 2 components, CF(1) - the catalytic core - and CF(0) - the membrane proton channel. CF(1) has five subunits: alpha(3), beta(3), gamma(1), delta(1), epsilon(1). CF(0) has three main subunits: a, b and c.

Its subcellular location is the mitochondrion membrane. In terms of biological role, this protein is one of the chains of the nonenzymatic membrane component (F0) of mitochondrial ATPase. This is ATP synthase subunit 9, mitochondrial (ATP9) from Helianthus annuus (Common sunflower).